The following is a 434-amino-acid chain: Glutamate-1-semialdehyde 2,1-aminomutase 1 (434 aa).

The residue at position 268 (K268) is an N6-(pyridoxal phosphate)lysine.

Belongs to the class-III pyridoxal-phosphate-dependent aminotransferase family. HemL subfamily. Homodimer. Requires pyridoxal 5'-phosphate as cofactor.

The protein resides in the cytoplasm. The catalysed reaction is (S)-4-amino-5-oxopentanoate = 5-aminolevulinate. It functions in the pathway porphyrin-containing compound metabolism; protoporphyrin-IX biosynthesis; 5-aminolevulinate from L-glutamyl-tRNA(Glu): step 2/2. This Shouchella clausii (strain KSM-K16) (Alkalihalobacillus clausii) protein is Glutamate-1-semialdehyde 2,1-aminomutase 1.